The chain runs to 201 residues: LexA repressor 1 (201 aa).

A DNA-binding region (H-T-H motif) is located at residues 27 to 47; the sequence is LAEIAQAFGFASRNAAQKHVQ. Active-site for autocatalytic cleavage activity residues include Ser-122 and Lys-159.

The protein belongs to the peptidase S24 family. Homodimer.

The catalysed reaction is Hydrolysis of Ala-|-Gly bond in repressor LexA.. Its function is as follows. Represses a number of genes involved in the response to DNA damage (SOS response), including recA and lexA. In the presence of single-stranded DNA, RecA interacts with LexA causing an autocatalytic cleavage which disrupts the DNA-binding part of LexA, leading to derepression of the SOS regulon and eventually DNA repair. This chain is LexA repressor 1, found in Xanthomonas axonopodis pv. citri (strain 306).